The sequence spans 190 residues: dTTP/UTP pyrophosphatase (190 aa).

Residue aspartate 68 is the Proton acceptor of the active site.

This sequence belongs to the Maf family. YhdE subfamily. It depends on a divalent metal cation as a cofactor.

It is found in the cytoplasm. The catalysed reaction is dTTP + H2O = dTMP + diphosphate + H(+). The enzyme catalyses UTP + H2O = UMP + diphosphate + H(+). Functionally, nucleoside triphosphate pyrophosphatase that hydrolyzes dTTP and UTP. May have a dual role in cell division arrest and in preventing the incorporation of modified nucleotides into cellular nucleic acids. The protein is dTTP/UTP pyrophosphatase of Pyrococcus furiosus (strain ATCC 43587 / DSM 3638 / JCM 8422 / Vc1).